The primary structure comprises 282 residues: Stage 0 sporulation protein J (282 aa).

The H-T-H motif DNA-binding region spans 139–158 (EQLAKRLGKSRPHIANHLRL).

This sequence belongs to the ParB family.

It is found in the cytoplasm. The protein localises to the nucleoid. Required for the initiation of sporulation and for normal chromosome segregation. Antagonizes sporulation inhibition by Soj. It probably interacts with a specific DNA site and other proteins involved in partitioning and cell division, and antagonizes Soj in response to cell cycle events related to chromosome partitioning. The protein is Stage 0 sporulation protein J of Bacillus subtilis (strain 168).